The following is a 427-amino-acid chain: Gustatory receptor for sugar taste 43a (427 aa).

Residues 1–37 are Cytoplasmic-facing; it reads MEISQPSIGIFYISKVLALAPYATVRNSKGRVEIGRS. A helical membrane pass occupies residues 38-63; sequence WLFTVYSATLTVVMVFLTYRGLLFDA. The Extracellular segment spans residues 64 to 75; the sequence is NSEIPVRMKSAT. Beta-D-fructose is bound by residues Arg70 and Asp83. Residues 76–96 traverse the membrane as a helical segment; the sequence is SKVVTALDVSVVVMAIVSGVY. The Cytoplasmic segment spans residues 97–135; sequence CGLFSLNDTLELNDRLNKIDNTLNAYNNFRRDRWRALGM. The helical transmembrane segment at 136 to 158 threads the bilayer; that stretch reads AAVSLLAISILVGLDVGTWMRIA. Residues 159 to 168 are Extracellular-facing; the sequence is QDMNIAQSDT. A helical transmembrane segment spans residues 169–193; that stretch reads ELNVHWYIPFYSLYFILTGLQVNIA. Position 182 (Tyr182) interacts with beta-D-fructose. The Cytoplasmic portion of the chain corresponds to 194–293; sequence NTAYGLGRRF…CVHLLSNSFG (100 aa). A helical transmembrane segment spans residues 294–316; it reads IAVLFILVSCLLHLVATAYFLFL. A beta-D-fructose-binding site is contributed by Thr310. The Extracellular portion of the chain corresponds to 317-324; the sequence is ELLSKRDN. Residues 325–346 traverse the membrane as a helical segment; it reads GYLWVQMLWICFHFLRLLMVVE. His337 lines the beta-D-fructose pocket. Residues 347 to 402 lie on the Cytoplasmic side of the membrane; that stretch reads PCHLAARESRKTIQIVCEIERKVHEPILAEAVKKFWQQLLVVDADFSACGLCRVNR. Residues 403–423 form a helical membrane-spanning segment; it reads TILTSFASAIATYLVILIQFQ. Residue Gln421 participates in Ca(2+) binding. The Extracellular segment spans residues 424–427; that stretch reads RTNG.

This sequence belongs to the insect chemoreceptor superfamily. Gustatory receptor (GR) family. Gr21a subfamily. In terms of assembly, homotetramer. Expressed in the adult labellar chemosensory neurons and in the adult head, abdomen, leg and wing. In larvae, is expressed in taste organs, as well as the brain and the gastrointestinal system.

It localises to the cell membrane. Functionally, gustatory receptor which mediates acceptance or avoidance behavior, depending on its substrates. Gr43a is the main sugar receptor in larvae. Functions as a narrowly tuned fructose receptor in taste neurons but also as a fructose receptor in the brain. Necessary and sufficient to sense hemolymph fructose and promote feeding in hungry flies but suppress feeding in satiated flies. The sequence is that of Gustatory receptor for sugar taste 43a (Gr43a) from Drosophila melanogaster (Fruit fly).